The sequence spans 424 residues: Phosphoribosylamine--glycine ligase (424 aa).

The ATP-grasp domain maps to Lys-107–Glu-313. Residue Val-133–Ser-194 coordinates ATP. Residues Glu-283 and Asn-285 each contribute to the Mg(2+) site.

This sequence belongs to the GARS family. It depends on Mg(2+) as a cofactor. The cofactor is Mn(2+).

It catalyses the reaction 5-phospho-beta-D-ribosylamine + glycine + ATP = N(1)-(5-phospho-beta-D-ribosyl)glycinamide + ADP + phosphate + H(+). The protein operates within purine metabolism; IMP biosynthesis via de novo pathway; N(1)-(5-phospho-D-ribosyl)glycinamide from 5-phospho-alpha-D-ribose 1-diphosphate: step 2/2. The protein is Phosphoribosylamine--glycine ligase of Aquifex aeolicus (strain VF5).